Here is a 320-residue protein sequence, read N- to C-terminus: Malate dehydrogenase (320 aa).

Residues 10 to 15 (GAGQIG) and Asp-34 contribute to the NAD(+) site. Residues Arg-83 and Arg-89 each contribute to the substrate site. Residues Asn-96 and 119 to 121 (ITN) contribute to the NAD(+) site. 2 residues coordinate substrate: Asn-121 and Arg-152. His-176 acts as the Proton acceptor in catalysis.

It belongs to the LDH/MDH superfamily. MDH type 3 family.

The catalysed reaction is (S)-malate + NAD(+) = oxaloacetate + NADH + H(+). Its function is as follows. Catalyzes the reversible oxidation of malate to oxaloacetate. This chain is Malate dehydrogenase, found in Methylobacterium nodulans (strain LMG 21967 / CNCM I-2342 / ORS 2060).